Reading from the N-terminus, the 187-residue chain is Ribosome-recycling factor (187 aa).

The protein belongs to the RRF family.

The protein localises to the cytoplasm. Responsible for the release of ribosomes from messenger RNA at the termination of protein biosynthesis. May increase the efficiency of translation by recycling ribosomes from one round of translation to another. The sequence is that of Ribosome-recycling factor from Roseobacter denitrificans (strain ATCC 33942 / OCh 114) (Erythrobacter sp. (strain OCh 114)).